The sequence spans 553 residues: Formate--tetrahydrofolate ligase (553 aa).

Residue 62 to 69 participates in ATP binding; it reads TPAGEGKS.

Belongs to the formate--tetrahydrofolate ligase family.

It carries out the reaction (6S)-5,6,7,8-tetrahydrofolate + formate + ATP = (6R)-10-formyltetrahydrofolate + ADP + phosphate. It participates in one-carbon metabolism; tetrahydrofolate interconversion. The chain is Formate--tetrahydrofolate ligase from Limosilactobacillus reuteri subsp. reuteri (strain JCM 1112) (Lactobacillus reuteri).